Here is a 183-residue protein sequence, read N- to C-terminus: Microfibrillar-associated protein 2 (183 aa).

A signal peptide (or 18) is located at residues 1 to 16; that stretch reads MRAACLFLLFMPGLLA. Q17 is subject to Pyrrolidone carboxylic acid. Y46, Y47, and Y49 each carry sulfotyrosine. Residues 52-92 form a disordered region; sequence VSPRTPEEQFQSQQQVQQEVIPAPTPEPAAAGDLETEPTEP. Low complexity predominate over residues 59–70; that stretch reads EQFQSQQQVQQE. One can recognise a ShKT domain in the interval 153 to 183; the sequence is CRDKFSKCGVMAVSGLCQSVAASCARSCGGC. 3 disulfides stabilise this stretch: C153/C183, C160/C176, and C169/C180.

It belongs to the MFAP family. Forms a ternary complex with BGN and ELN. Interacts with FBN1 (via N-terminal domain) and FBN2. Post-translationally, forms intermolecular disulfide bonds either with other MAGP-1 molecules or with other components of the microfibrils. May form transglutaminase cross-links. In terms of processing, O-glycosylated.

The protein resides in the secreted. It localises to the extracellular space. Its subcellular location is the extracellular matrix. Its function is as follows. Component of the elastin-associated microfibrils. This Mus musculus (Mouse) protein is Microfibrillar-associated protein 2 (Mfap2).